The following is a 123-amino-acid chain: Immunoglobulin lambda variable 5-37 (123 aa).

An N-terminal signal peptide occupies residues 1 to 19 (MAWTPLLLLLLSHCTGSLS). Residues 20–44 (QPVLTQPPSSSASPGESARLTCTLP) form a framework-1 region. The 103-residue stretch at 21 to 123 (PVLTQPPSSS…YCMIWPSNAS (103 aa)) folds into the Ig-like domain. An intrachain disulfide couples Cys-41 to Cys-115. The tract at residues 45 to 53 (SDINVGSYN) is complementarity-determining-1. A framework-2 region spans residues 54-70 (IYWYQQKPGSPPRYLLY). The complementarity-determining-2 stretch occupies residues 71–77 (YYSDSDK). Residues 78 to 115 (GQGSGVPSRFSGSKDASANTGILLISGLQSEDEADYYC) are framework-3. The interval 116 to 123 (MIWPSNAS) is complementarity-determining-3.

As to quaternary structure, immunoglobulins are composed of two identical heavy chains and two identical light chains; disulfide-linked.

The protein localises to the secreted. It localises to the cell membrane. Functionally, v region of the variable domain of immunoglobulin light chains that participates in the antigen recognition. Immunoglobulins, also known as antibodies, are membrane-bound or secreted glycoproteins produced by B lymphocytes. In the recognition phase of humoral immunity, the membrane-bound immunoglobulins serve as receptors which, upon binding of a specific antigen, trigger the clonal expansion and differentiation of B lymphocytes into immunoglobulins-secreting plasma cells. Secreted immunoglobulins mediate the effector phase of humoral immunity, which results in the elimination of bound antigens. The antigen binding site is formed by the variable domain of one heavy chain, together with that of its associated light chain. Thus, each immunoglobulin has two antigen binding sites with remarkable affinity for a particular antigen. The variable domains are assembled by a process called V-(D)-J rearrangement and can then be subjected to somatic hypermutations which, after exposure to antigen and selection, allow affinity maturation for a particular antigen. This Homo sapiens (Human) protein is Immunoglobulin lambda variable 5-37.